The primary structure comprises 380 residues: Gibberellin 20 oxidase 3 (380 aa).

A Fe2OG dioxygenase domain is found at 221–321; sequence DSDSIFRLNY…RKTFAFFLCP (101 aa). Residues His-246, Asp-248, and His-302 each contribute to the Fe cation site. The active site involves Arg-312.

Belongs to the iron/ascorbate-dependent oxidoreductase family. GA20OX subfamily. Fe(2+) is required as a cofactor. It depends on L-ascorbate as a cofactor. As to expression, expressed at high level in developing siliques. Detected in seeds, roots, leaves and inflorescences. In seeds, specifically detected at the outer layer of the outer integument.

It carries out the reaction gibberellin A12 + 2 2-oxoglutarate + 3 O2 + H(+) = gibberellin A9 + 2 succinate + 3 CO2 + 2 H2O. The catalysed reaction is gibberellin A12 + 3 2-oxoglutarate + 3 O2 = gibberellin A25 + 3 succinate + 3 CO2 + H2O + H(+). It catalyses the reaction gibberellin A53 + 2 2-oxoglutarate + 3 O2 + H(+) = gibberellin A20 + 2 succinate + 3 CO2 + 2 H2O. It participates in plant hormone biosynthesis; gibberellin biosynthesis. Its function is as follows. Key oxidase enzyme in the biosynthesis of gibberellin that catalyzes the conversion of GA12 and GA53 to GA9 and GA20 respectively, via a three-step oxidation at C-20 of the GA skeleton, and GA25 is also formed as a minor product. GA53 is less effectively oxidized than GA12. The chain is Gibberellin 20 oxidase 3 (GA20OX3) from Arabidopsis thaliana (Mouse-ear cress).